Here is a 283-residue protein sequence, read N- to C-terminus: Aspartate dehydrogenase domain-containing protein (283 aa).

S20 and S168 each carry phosphoserine.

The protein belongs to the L-aspartate dehydrogenase family.

The sequence is that of Aspartate dehydrogenase domain-containing protein from Homo sapiens (Human).